Consider the following 1067-residue polypeptide: Protein CLEC16A homolog (1067 aa).

In terms of domain architecture, FPL spans 50–199; the sequence is LRCIAEILIW…AVRTISLNVY (150 aa). Residues 333–353 traverse the membrane as a helical segment; that stretch reads SIVALFLLSLVFLVVSHAPLV. Over residues 409–418 the composition is skewed to low complexity; sequence SSSSYALSED. Disordered stretches follow at residues 409–434, 837–861, 876–993, and 1037–1067; these read SSSS…LDSQ, ASSS…PMFS, SNSA…SRSH, and QSSE…IETV. Residues 421–432 are compositionally biased toward polar residues; that stretch reads VESSSPATTELD. Over residues 876-888 the composition is skewed to polar residues; that stretch reads SNSAGVSRTQMAP. Residues 917–926 show a composition bias toward basic and acidic residues; sequence RADHSDRERS. Positions 927-947 are enriched in low complexity; that stretch reads PSVSMGSHSSSQSRENSQPRS. The segment covering 951–974 has biased composition (basic and acidic residues); that stretch reads RSRESSPRMPRPRSEEIPLEDFQH. Over residues 975-993 the composition is skewed to polar residues; it reads SRNNSPHSRGNPSPASRSH. Residues 1057 to 1067 show a composition bias toward basic and acidic residues; it reads EGRRRGAIETV.

It belongs to the CLEC16A/gop-1 family. As to quaternary structure, interacts with the class C Vps-HOPS complex components; Car, Dor and Vps16a.

Its subcellular location is the cytoplasmic vesicle. The protein resides in the autophagosome membrane. It localises to the late endosome membrane. It is found in the golgi apparatus membrane. Its function is as follows. Required for mitophagy, autophagy and endosome maturation, possibly by acting in multiple membrane trafficking pathways. Required for endosome trafficking and maturation. Functions with the class C Vps-HOPS complex member Vps16a to promote endosomal maturation into degradative late endosomes and lysosomes. In response to starvation, functions at an early stage of autophagy to promote autophagosome growth and efficient autophagy. Essential for the recruitment of lva-positive Golgi elements to autophagosomes. Likely to function by promoting membrane traffic from the Golgi complex to the developing autophagosomes. Also regulates synaptic growth at the neuromuscular junctions (NMJ) by down-regulating BMP signaling. This chain is Protein CLEC16A homolog, found in Drosophila melanogaster (Fruit fly).